Reading from the N-terminus, the 462-residue chain is General transcription factor IIH subunit 4 (462 aa).

Belongs to the TFB2 family. Component of the 7-subunit TFIIH core complex composed of XPB/ERCC3, XPD/ERCC2, GTF2H1, GTF2H2, GTF2H3, GTF2H4 and GTF2H5, which is active in NER. The core complex associates with the 3-subunit CDK-activating kinase (CAK) module composed of CCNH/cyclin H, CDK7 and MNAT1 to form the 10-subunit holoenzyme (holo-TFIIH) active in transcription. Part of TBP-based Pol II pre-initiation complex (PIC), in which Pol II core assembles with general transcription factors and other specific initiation factors including GTF2E1, GTF2E2, GTF2F1, GTF2F2, TCEA1, ERCC2, ERCC3, GTF2H2, GTF2H3, GTF2H4, GTF2H5, GTF2A1, GTF2A2, GTF2B and TBP; this large multi-subunit PIC complex mediates DNA unwinding and targets Pol II core to the transcription start site where the first phosphodiester bond forms.

The protein localises to the nucleus. In terms of biological role, component of the general transcription and DNA repair factor IIH (TFIIH) core complex, which is involved in general and transcription-coupled nucleotide excision repair (NER) of damaged DNA and, when complexed to CAK, in RNA transcription by RNA polymerase II. In NER, TFIIH acts by opening DNA around the lesion to allow the excision of the damaged oligonucleotide and its replacement by a new DNA fragment. In transcription, TFIIH has an essential role in transcription initiation. When the pre-initiation complex (PIC) has been established, TFIIH is required for promoter opening and promoter escape. Phosphorylation of the C-terminal tail (CTD) of the largest subunit of RNA polymerase II by the kinase module CAK controls the initiation of transcription. Stimulates the ATPase activity of TFIIH subunit XPB/ERCC3. The polypeptide is General transcription factor IIH subunit 4 (GTF2H4) (Homo sapiens (Human)).